Here is a 105-residue protein sequence, read N- to C-terminus: Large ribosomal subunit protein eL42 (105 aa).

Residues 28-57 (YKKGKDSLAAQGKRRYDRKQSGYGGQTKPV) form a disordered region.

The protein belongs to the eukaryotic ribosomal protein eL42 family.

The protein is Large ribosomal subunit protein eL42 (RPL44) of Gossypium hirsutum (Upland cotton).